Here is a 457-residue protein sequence, read N- to C-terminus: Cysteine--tRNA ligase (457 aa).

Position 27 (cysteine 27) interacts with Zn(2+). The short motif at 29–39 is the 'HIGH' region element; sequence PTVYDFAHIGN. Residues cysteine 211, histidine 236, and glutamate 240 each coordinate Zn(2+). The 'KMSKS' region motif lies at 269-273; the sequence is KMSKS. Lysine 272 serves as a coordination point for ATP.

It belongs to the class-I aminoacyl-tRNA synthetase family. Monomer. Zn(2+) serves as cofactor.

It is found in the cytoplasm. It carries out the reaction tRNA(Cys) + L-cysteine + ATP = L-cysteinyl-tRNA(Cys) + AMP + diphosphate. This is Cysteine--tRNA ligase from Ehrlichia ruminantium (strain Gardel).